A 241-amino-acid polypeptide reads, in one-letter code: DNA repair protein RecO (241 aa).

Belongs to the RecO family.

In terms of biological role, involved in DNA repair and RecF pathway recombination. This Orientia tsutsugamushi (strain Boryong) (Rickettsia tsutsugamushi) protein is DNA repair protein RecO.